Reading from the N-terminus, the 375-residue chain is 23S rRNA (uracil(747)-C(5))-methyltransferase RlmC (375 aa).

Residues cysteine 3, cysteine 11, cysteine 14, and cysteine 87 each contribute to the [4Fe-4S] cluster site. Residues glutamine 212, phenylalanine 241, glutamate 262, and asparagine 307 each coordinate S-adenosyl-L-methionine. The active-site Nucleophile is cysteine 334.

It belongs to the class I-like SAM-binding methyltransferase superfamily. RNA M5U methyltransferase family. RlmC subfamily.

It catalyses the reaction uridine(747) in 23S rRNA + S-adenosyl-L-methionine = 5-methyluridine(747) in 23S rRNA + S-adenosyl-L-homocysteine + H(+). Functionally, catalyzes the formation of 5-methyl-uridine at position 747 (m5U747) in 23S rRNA. In Vibrio cholerae serotype O1 (strain ATCC 39541 / Classical Ogawa 395 / O395), this protein is 23S rRNA (uracil(747)-C(5))-methyltransferase RlmC.